The following is a 366-amino-acid chain: Terpene cyclase-like protein flvF (366 aa).

It belongs to the terpene synthase family. In terms of assembly, homodimer.

It carries out the reaction N,N-dimethyl-cadaverine + 2,6,9-trimethyl-13-oxatetracyclo[6.3.1.1(6,9).0(1,5)]tridecane carbocation = pre-flavunoidine + H(+). It functions in the pathway secondary metabolite biosynthesis; terpenoid biosynthesis. In terms of biological role, terpene cyclase-like protein; part of the gene cluster that mediates the biosynthesis of flavunoidine, an alkaloidal terpenoid with a tetracyclic cage-like core connected to dimethylcadaverine via a C-N bond and acylated with 5,5-dimethyl-L-pipecolate. The tetracyclic core is synthesized by the terpene cyclase flvE and the cytochrome P450 monooxygenase flvD. The terpene cyclase flvE catalyzes the cyclization of farnesyl pyrophosphate (FPP) to form (1R,4R,5S)-(+)-acoradiene and the cytochrome P450 monooxygenase flvD is then responsible for oxidative conversion of (1R,4R,5S)-(+)-acoradiene into the tetracyclic cage present in the final product flavunoidine. In parallel, the N-methyltransferase flvH dimethylates L-lysine to give N,N-dimethyl-L-Lysin which is decarboxylated by flvG to afford dimethylcadaverine. The terpene cyclase-like protein flvF is the enzyme that attaches the dimethylcadaverine precusor at the C-7 of the tetracyclic cage to yield pre-flavunoidine. The cytochrome monooxygenase flvC hydroxylates the C-10 position of pre-flavunoidine whereas the NRPS flvI acylates the terpenoid core at the hydroxylated C-10 with dimethylpipecolate to yield final flavunoidine. The bifunctional enzyme flvA and the dehydrogenase flvB are responsible for the synthesis of the dimethylpipecolate precursor. The PLP-dependent lyase domain of flvA might use L-O-acetyl-homoserine and alpha-keto-isovalerate to form an intermediary ketone that can cyclize intramolecularly to yield an imine. The imine can be reduced by flvB to yield the 6-carboxylated pipecolate. The C-terminal alpha-KG-dependent oxygenase domain of flvA is then proposed to catalyze the decarboxylation to yield dimethylpipecolate. This is Terpene cyclase-like protein flvF from Aspergillus flavus (strain ATCC 200026 / FGSC A1120 / IAM 13836 / NRRL 3357 / JCM 12722 / SRRC 167).